The sequence spans 636 residues: ATP-dependent zinc metalloprotease FtsH (636 aa).

Residues 1 to 12 (MKKLLENLSLWM) lie on the Cytoplasmic side of the membrane. The chain crosses the membrane as a helical span at residues 13-33 (GIIILVTLLFGQVALNFGFGI). Over 34 to 104 (RNEKIQFSEF…VASGDSFLGL (71 aa)) the chain is Periplasmic. Residues 105–125 (LFNILISWFPMLLLIGVWIFF) form a helical membrane-spanning segment. The Cytoplasmic portion of the chain corresponds to 126–636 (MKQMQAGGNK…ESDLDTGDKE (511 aa)). Residue 197–204 (GPPGTGKT) participates in ATP binding. Residue His419 coordinates Zn(2+). The active site involves Glu420. Zn(2+) is bound by residues His423 and Asp497.

This sequence in the central section; belongs to the AAA ATPase family. It in the C-terminal section; belongs to the peptidase M41 family. In terms of assembly, homohexamer. It depends on Zn(2+) as a cofactor.

It localises to the cell inner membrane. In terms of biological role, acts as a processive, ATP-dependent zinc metallopeptidase for both cytoplasmic and membrane proteins. Plays a role in the quality control of integral membrane proteins. The sequence is that of ATP-dependent zinc metalloprotease FtsH from Neorickettsia risticii (strain Illinois).